The following is a 143-amino-acid chain: Transcriptional regulator MraZ (143 aa).

SpoVT-AbrB domains are found at residues 5-47 (EYKH…PMHE) and 76-119 (ATEC…SSKR).

The protein belongs to the MraZ family. Forms oligomers.

The protein resides in the cytoplasm. Its subcellular location is the nucleoid. This is Transcriptional regulator MraZ from Halothermothrix orenii (strain H 168 / OCM 544 / DSM 9562).